The sequence spans 230 residues: uncharacterized protein (230 aa).

An N-terminal signal peptide occupies residues 1–22 (MNIRSFLLISIFTAISYLVVDG). The Lumenal portion of the chain corresponds to 23 to 167 (ATPRTFAPSA…YTPYGGVKAL (145 aa)). Residues 55–90 (SSSSSSSSISTSHDSQPSTSSSSPSSTSTSSSSGTS) form a disordered region. The chain crosses the membrane as a helical span at residues 168–188 (IGILVGVVVGSVFLLAIVMVI). Over 189 to 230 (ARIWGPRLLANKDQNNNNEDLDSNLVSKDSEGTPQITYASNF) the chain is Cytoplasmic. The disordered stretch occupies residues 208–230 (DLDSNLVSKDSEGTPQITYASNF).

It is found in the endoplasmic reticulum membrane. This is an uncharacterized protein from Schizosaccharomyces pombe (strain 972 / ATCC 24843) (Fission yeast).